We begin with the raw amino-acid sequence, 231 residues long: Cytochrome b-c1 complex subunit Rieske, mitochondrial (231 aa).

A mitochondrion-targeting transit peptide spans 1-24; the sequence is MAPVSIVSRAAMRAAAAPARAVRA. A propeptide spans 25 to 32 (removed in mature form); the sequence is LTTSTALQ. Topologically, residues 33 to 65 are mitochondrial matrix; the sequence is GSSSSTFESPFKGESKAAKVPDFGKYMSKAPPS. A helical membrane pass occupies residues 66 to 95; it reads TNMLFSYFMVGTMGAITAAGAKSTIQEFLK. Residues 96-231 lie on the Mitochondrial intermembrane side of the membrane; the sequence is NMSASADVLA…FPEEGKLVIG (136 aa). One can recognise a Rieske domain in the interval 134–229; that stretch reads RHRTPAEIEE…YEFPEEGKLV (96 aa). [2Fe-2S] cluster-binding residues include C174, H176, C193, and H196. Cysteines 179 and 195 form a disulfide.

The protein belongs to the Rieske iron-sulfur protein family. As to quaternary structure, component of the ubiquinol-cytochrome c oxidoreductase (cytochrome b-c1 complex, complex III, CIII), a multisubunit enzyme composed of 10 subunits. The complex is composed of 3 respiratory subunits cytochrome b (cob), cytochrome c1 (cyt-1) and Rieske protein (fes-1), 2 core protein subunits pep and ucr-1, and 5 low-molecular weight protein subunits qcr6, qcr7, qcr8, qcr9 and probably NCU16844/qcr10. The complex exists as an obligatory dimer and forms supercomplexes (SCs) in the inner mitochondrial membrane with NADH-ubiquinone oxidoreductase (complex I, CI) and cytochrome c oxidase (complex IV, CIV), resulting in different assemblies (supercomplexes SCI(1)III(2), SCIII(2)IV(1) and SCIII(2)IV(2) as well as higher order I(x)III(y)IV(z) megacomplexes). The cofactor is [2Fe-2S] cluster. Processed by both the mitochondrial processing peptidase (MPP) and the mitochondrial intermediate protease (MIP). Initially, MPP removes 25 amino acids from the newly imported precursor in the mitochondrial matrix. This proteolytic processing is then followed by a second proteolytic cleavage by MIP, which removes an octapeptide to generate mature-sized Rieske protein.

The protein resides in the mitochondrion inner membrane. It carries out the reaction a quinol + 2 Fe(III)-[cytochrome c](out) = a quinone + 2 Fe(II)-[cytochrome c](out) + 2 H(+)(out). Its function is as follows. Component of the ubiquinol-cytochrome c oxidoreductase, a multisubunit transmembrane complex that is part of the mitochondrial electron transport chain which drives oxidative phosphorylation. The respiratory chain contains 3 multisubunit complexes succinate dehydrogenase (complex II, CII), ubiquinol-cytochrome c oxidoreductase (cytochrome b-c1 complex, complex III, CIII) and cytochrome c oxidase (complex IV, CIV), that cooperate to transfer electrons derived from NADH and succinate to molecular oxygen, creating an electrochemical gradient over the inner membrane that drives transmembrane transport and the ATP synthase. The cytochrome b-c1 complex catalyzes electron transfer from ubiquinol to cytochrome c, linking this redox reaction to translocation of protons across the mitochondrial inner membrane, with protons being carried across the membrane as hydrogens on the quinol. In the process called Q cycle, 2 protons are consumed from the matrix, 4 protons are released into the intermembrane space and 2 electrons are passed to cytochrome c. The Rieske protein is a catalytic core subunit containing a [2Fe-2S] iron-sulfur cluster. It cycles between 2 conformational states during catalysis to transfer electrons from the quinol bound in the Q(0) site in cytochrome b to cytochrome c1. This Neurospora crassa (strain ATCC 24698 / 74-OR23-1A / CBS 708.71 / DSM 1257 / FGSC 987) protein is Cytochrome b-c1 complex subunit Rieske, mitochondrial (fes-1).